Consider the following 362-residue polypeptide: UDP-N-acetylglucosamine--N-acetylmuramyl-(pentapeptide) pyrophosphoryl-undecaprenol N-acetylglucosamine transferase (362 aa).

UDP-N-acetyl-alpha-D-glucosamine-binding positions include 15 to 17 (TGG), Asn127, Arg165, Ser191, Ile247, 266 to 271 (ALTVSE), and Gln292.

This sequence belongs to the glycosyltransferase 28 family. MurG subfamily.

Its subcellular location is the cell inner membrane. It catalyses the reaction di-trans,octa-cis-undecaprenyl diphospho-N-acetyl-alpha-D-muramoyl-L-alanyl-D-glutamyl-meso-2,6-diaminopimeloyl-D-alanyl-D-alanine + UDP-N-acetyl-alpha-D-glucosamine = di-trans,octa-cis-undecaprenyl diphospho-[N-acetyl-alpha-D-glucosaminyl-(1-&gt;4)]-N-acetyl-alpha-D-muramoyl-L-alanyl-D-glutamyl-meso-2,6-diaminopimeloyl-D-alanyl-D-alanine + UDP + H(+). Its pathway is cell wall biogenesis; peptidoglycan biosynthesis. Cell wall formation. Catalyzes the transfer of a GlcNAc subunit on undecaprenyl-pyrophosphoryl-MurNAc-pentapeptide (lipid intermediate I) to form undecaprenyl-pyrophosphoryl-MurNAc-(pentapeptide)GlcNAc (lipid intermediate II). The protein is UDP-N-acetylglucosamine--N-acetylmuramyl-(pentapeptide) pyrophosphoryl-undecaprenol N-acetylglucosamine transferase of Shewanella sp. (strain ANA-3).